The primary structure comprises 385 residues: 8-amino-7-oxononanoate synthase (385 aa).

Position 21 (Arg-21) interacts with substrate. 108–109 (GF) lines the pyridoxal 5'-phosphate pocket. His-133 provides a ligand contact to substrate. 3 residues coordinate pyridoxal 5'-phosphate: Ser-179, His-207, and Thr-233. N6-(pyridoxal phosphate)lysine is present on Lys-236. Substrate is bound at residue Thr-352.

The protein belongs to the class-II pyridoxal-phosphate-dependent aminotransferase family. BioF subfamily. Homodimer. Pyridoxal 5'-phosphate serves as cofactor.

The catalysed reaction is 6-carboxyhexanoyl-[ACP] + L-alanine + H(+) = (8S)-8-amino-7-oxononanoate + holo-[ACP] + CO2. It functions in the pathway cofactor biosynthesis; biotin biosynthesis. Catalyzes the decarboxylative condensation of pimeloyl-[acyl-carrier protein] and L-alanine to produce 8-amino-7-oxononanoate (AON), [acyl-carrier protein], and carbon dioxide. In Salmonella schwarzengrund (strain CVM19633), this protein is 8-amino-7-oxononanoate synthase.